Consider the following 211-residue polypeptide: Ribosomal RNA small subunit methyltransferase G (211 aa).

Residues glycine 81, leucine 86, 132-133, and arginine 147 each bind S-adenosyl-L-methionine; that span reads VE.

The protein belongs to the methyltransferase superfamily. RNA methyltransferase RsmG family.

The protein localises to the cytoplasm. The enzyme catalyses guanosine(527) in 16S rRNA + S-adenosyl-L-methionine = N(7)-methylguanosine(527) in 16S rRNA + S-adenosyl-L-homocysteine. Functionally, specifically methylates the N7 position of guanine in position 527 of 16S rRNA. The sequence is that of Ribosomal RNA small subunit methyltransferase G from Actinobacillus succinogenes (strain ATCC 55618 / DSM 22257 / CCUG 43843 / 130Z).